A 124-amino-acid chain; its full sequence is MTTMITLRRRFAVAVAGVATAAATTVTLAPAPANAADVYGAIAYSGNGSWGRSWDYPTRAAAEATAVKSCGYSDCKVLTSFTACGAVAANDRAYQGGVGPTLAAAMKDALTKLGGGYIDTWACN.

Positions 1 to 35 (MTTMITLRRRFAVAVAGVATAAATTVTLAPAPANA) form a signal peptide, tat-type signal.

This sequence to M.tuberculosis Rv1813c. In terms of processing, predicted to be exported by the Tat system. The position of the signal peptide cleavage has not been experimentally proven.

The protein is Protein MT1307 of Mycobacterium tuberculosis (strain CDC 1551 / Oshkosh).